Here is a 714-residue protein sequence, read N- to C-terminus: MPAAAGDGLLGEPAAPGGGGGAEDAARPAAACEGSFLPAWVSGVPRERLRDFQHHKRVGNYLIGSRKLGEGSFAKVREGLHVLTGEKVAIKVIDKKRAKKDTYVTKNLRREGQIQQMIRHPNITQLLDILETENSYYLVMELCPGGNLMHKIYEKKRLEESEARRYIRQLISAVEHLHRAGVVHRDLKIENLLLDEDNNIKLIDFGLSNCAGILGYSDPFSTQCGSPAYAAPELLARKKYGPKIDVWSIGVNMYAMLTGTLPFTVEPFSLRALYQKMVDKEMNPLPTQLSTGAISFLRSLLEPDPVKRPNIQQALANRWLNENYTGKVPCNVTYPNRISLEDLSPSVVLHMTEKLGYKNSDVINTVLSNRACHILAIYFLLNKKLERYLSGKSDIQDSLCYKTRLYQIEKYRAPKESYEASLDTWTRDLEFHAVQDKKPKEQEKRGDFLHRPFSKKLDKNLPSHKQPSGSLMTQIQNTKALLKDRKASKSSFPDKDSFGCRNIFRKTSDSNCVASSSMEFIPVPPPRTPRIVKKPEPHQPGPGSTGIPHKEDPLMLDMVRSFESVDRDDHVEVLSPSHHYRILNSPVSLARRNSSERTLSPGLPSGSMSPLHTPLHPTLVSFAHEDKNSPPKEEGLCCPPPVPSNGPMQPLGSPNCVKSRGRFPMMGIGQMLRKRHQSLQPSADRPLEASLPPLQPLAPVNLAFDMADGVKTQC.

The segment covering 1–15 (MPAAAGDGLLGEPAA) has biased composition (low complexity). Residues 1-26 (MPAAAGDGLLGEPAAPGGGGGAEDAA) are disordered. The Protein kinase domain maps to 62 to 320 (LIGSRKLGEG…IQQALANRWL (259 aa)). ATP contacts are provided by residues 68-76 (LGEGSFAKV) and lysine 91. Residue aspartate 186 is the Proton acceptor of the active site. A compositionally biased stretch (basic and acidic residues) spans 437–461 (KKPKEQEKRGDFLHRPFSKKLDKNL). Disordered regions lie at residues 437–471 (KKPK…SGSL), 518–552 (MEFI…HKED), and 590–615 (ARRN…HTPL). The span at 599–611 (LSPGLPSGSMSPL) shows a compositional bias: low complexity.

This sequence belongs to the protein kinase superfamily. CAMK Ser/Thr protein kinase family. SNF1 subfamily.

The catalysed reaction is L-seryl-[protein] + ATP = O-phospho-L-seryl-[protein] + ADP + H(+). It carries out the reaction L-threonyl-[protein] + ATP = O-phospho-L-threonyl-[protein] + ADP + H(+). In Homo sapiens (Human), this protein is Hormonally up-regulated neu tumor-associated kinase (HUNK).